We begin with the raw amino-acid sequence, 71 residues long: uncharacterized protein (71 aa).

This is an uncharacterized protein from Methanocaldococcus jannaschii (strain ATCC 43067 / DSM 2661 / JAL-1 / JCM 10045 / NBRC 100440) (Methanococcus jannaschii).